A 102-amino-acid polypeptide reads, in one-letter code: Large ribosomal subunit protein bL21 (102 aa).

The protein belongs to the bacterial ribosomal protein bL21 family. In terms of assembly, part of the 50S ribosomal subunit. Contacts protein L20.

Its function is as follows. This protein binds to 23S rRNA in the presence of protein L20. The sequence is that of Large ribosomal subunit protein bL21 from Ehrlichia canis (strain Jake).